A 136-amino-acid chain; its full sequence is Small ribosomal subunit protein uS11 (136 aa).

2 disordered regions span residues 1–20 (MAQR…NVTN) and 115–136 (VTPQ…EKAR). Over residues 125–136 (PPKRVLKREKAR) the composition is skewed to basic residues.

Belongs to the universal ribosomal protein uS11 family. Part of the 30S ribosomal subunit. Interacts with proteins S7 and S18. Binds to IF-3.

Its function is as follows. Located on the platform of the 30S subunit, it bridges several disparate RNA helices of the 16S rRNA. Forms part of the Shine-Dalgarno cleft in the 70S ribosome. The chain is Small ribosomal subunit protein uS11 from Mycoplasmopsis pulmonis (strain UAB CTIP) (Mycoplasma pulmonis).